Reading from the N-terminus, the 571-residue chain is uncharacterized protein (571 aa).

This is an uncharacterized protein from Methanocaldococcus jannaschii (strain ATCC 43067 / DSM 2661 / JAL-1 / JCM 10045 / NBRC 100440) (Methanococcus jannaschii).